The sequence spans 448 residues: Putative sodium-coupled neutral amino acid transporter 11 (448 aa).

Positions 1–20 (MESERSCLLSSHDAGKGGSS) are disordered. Transmembrane regions (helical) follow at residues 22–42 (VSSA…IGLP), 52–72 (MGLL…ILLV), 94–114 (IGYI…MISY), 143–163 (FVIA…RDIA), 165–185 (LGKV…TVVV), 200–220 (AWVF…FALI), 246–266 (ISVG…YATF), 286–306 (TFGR…ECFV), 324–344 (SSHV…SLSY), 346–366 (CLGI…MFIF), and 389–409 (MILV…ALFP). N-linked (GlcNAc...) asparagine glycans are attached at residues asparagine 425, asparagine 440, and asparagine 444.

Belongs to the amino acid/polyamine transporter 2 family.

Its subcellular location is the membrane. Putative sodium-dependent amino acid/proton antiporter. The protein is Putative sodium-coupled neutral amino acid transporter 11 (slc38a11) of Danio rerio (Zebrafish).